A 121-amino-acid polypeptide reads, in one-letter code: RxLR effector protein PexRD2 (121 aa).

A signal peptide spans 1 to 20; it reads MRLSYVIVVIATSFLVTTEA. The short motif at 38 to 56 is the RxLR-dEER element; the sequence is RLLRKHYTAAENDDDSEAR. Residues 57 to 121 are WY domain; sequence ALNTEKMKTM…LNYVAEHTAV (65 aa).

The protein belongs to the RxLR effector family. Homodimer. Interacts with host MAPKKK epsilon (via its kinase domain).

It is found in the secreted. The protein localises to the host cytoplasm. The protein resides in the host nucleus. Its function is as follows. Effector that enhances P.infestans colonization of Nicotiana benthamiana leaves. Induces a weak Cell death response in N.benthamiana. PexRD2-induced cell death is dependent on SGT1, suggesting that PexRD2 is recognized by the plant immune system. Interacts with the kinase domain of the host MAPKKK epsilon, a positive regulator of cell death associated with plant immunity, and perturbs signaling pathways triggered by MAPKKK epsilon. This is RxLR effector protein PexRD2 from Phytophthora infestans (strain T30-4) (Potato late blight agent).